Reading from the N-terminus, the 238-residue chain is Ribose-5-phosphate isomerase A (238 aa).

Residues 30 to 33 (SGST), 87 to 90 (DGAD), and 100 to 103 (KGGG) contribute to the substrate site. Residue Glu-109 is the Proton acceptor of the active site. Lys-127 lines the substrate pocket.

This sequence belongs to the ribose 5-phosphate isomerase family. In terms of assembly, homodimer.

The catalysed reaction is aldehydo-D-ribose 5-phosphate = D-ribulose 5-phosphate. It functions in the pathway carbohydrate degradation; pentose phosphate pathway; D-ribose 5-phosphate from D-ribulose 5-phosphate (non-oxidative stage): step 1/1. In terms of biological role, catalyzes the reversible conversion of ribose-5-phosphate to ribulose 5-phosphate. In Prochlorococcus marinus (strain MIT 9303), this protein is Ribose-5-phosphate isomerase A.